The primary structure comprises 488 residues: Serine hydroxymethyltransferase, mitochondrial (488 aa).

The N-terminal 20 residues, 1 to 20, are a transit peptide targeting the mitochondrion; it reads MAVLRQFVKNSYSSIPKRFY. Lysine 265 carries the post-translational modification N6-(pyridoxal phosphate)lysine.

The protein belongs to the SHMT family. In terms of assembly, homotetramer. Pyridoxal 5'-phosphate serves as cofactor.

Its subcellular location is the mitochondrion. The catalysed reaction is (6R)-5,10-methylene-5,6,7,8-tetrahydrofolate + glycine + H2O = (6S)-5,6,7,8-tetrahydrofolate + L-serine. It participates in one-carbon metabolism; tetrahydrofolate interconversion. In terms of biological role, interconversion of serine and glycine. This chain is Serine hydroxymethyltransferase, mitochondrial (shm2), found in Schizosaccharomyces pombe (strain 972 / ATCC 24843) (Fission yeast).